We begin with the raw amino-acid sequence, 291 residues long: Acetylglutamate kinase (291 aa).

Residues 64–65, Arg-86, and Asn-190 each bind substrate; that span reads GG.

The protein belongs to the acetylglutamate kinase family. ArgB subfamily.

It localises to the cytoplasm. It carries out the reaction N-acetyl-L-glutamate + ATP = N-acetyl-L-glutamyl 5-phosphate + ADP. It functions in the pathway amino-acid biosynthesis; L-arginine biosynthesis; N(2)-acetyl-L-ornithine from L-glutamate: step 2/4. Functionally, catalyzes the ATP-dependent phosphorylation of N-acetyl-L-glutamate. The protein is Acetylglutamate kinase of Leptospira borgpetersenii serovar Hardjo-bovis (strain L550).